A 245-amino-acid polypeptide reads, in one-letter code: Purine nucleoside phosphorylase (245 aa).

An a purine D-ribonucleoside-binding site is contributed by H8. Phosphate contacts are provided by residues 24–28 (GDPGR), R46, and 89–92 (RAGS). Position 184-185 (184-185 (ME)) interacts with a purine D-ribonucleoside. D207 functions as the Proton donor in the catalytic mechanism.

Belongs to the PNP/MTAP phosphorylase family. In terms of assembly, homohexamer; trimer of homodimers.

It carries out the reaction inosine + phosphate = alpha-D-ribose 1-phosphate + hypoxanthine. The catalysed reaction is guanosine + phosphate = alpha-D-ribose 1-phosphate + guanine. The enzyme catalyses 2'-deoxyguanosine + phosphate = 2-deoxy-alpha-D-ribose 1-phosphate + guanine. It catalyses the reaction 2'-deoxyinosine + phosphate = 2-deoxy-alpha-D-ribose 1-phosphate + hypoxanthine. The protein operates within purine metabolism; purine nucleoside salvage. In terms of biological role, as part of the purine salvage pathway, catalyzes the phosphorolytic breakdown of the N-glycosidic bond in the beta-(deoxy)ribonucleoside molecules, with the formation of the corresponding free purine bases and pentose-1-phosphate. Preferentially acts on inosine and guanosine, and to a lesser extent on 2'-deoxyinosine and 2'-deoxyguanosine. In Plasmodium vivax (strain Salvador I), this protein is Purine nucleoside phosphorylase.